An 816-amino-acid chain; its full sequence is Probable E3 ubiquitin-protein ligase hulA (816 aa).

Residues 1–112 (MGSNLPAQPN…QMGGDEMLTR (112 aa)) form the C2 domain. 2 disordered regions span residues 134 to 238 (NLST…GWER) and 254 to 354 (RTTT…YFVD). The segment covering 160–178 (VPQVAPSSSHPAASGAAPV) has biased composition (low complexity). The segment covering 181–192 (SASNPSLNPQRV) has biased composition (polar residues). Over residues 193–213 (PSTTRPSSTAAPASAAGAAAS) the composition is skewed to low complexity. Polar residues-rich tracts occupy residues 214-227 (NTHGSRTNLSSFED) and 254-267 (RTTTWTRPSSNYNE). Residues 230 to 263 (GRLPAGWERREDNLGRTYYVDHNTRTTTWTRPSS) enclose the WW 1 domain. Positions 268–295 (HAQRSQREANMQLERRAHQSRMLPEDRT) are enriched in basic and acidic residues. Polar residues predominate over residues 296 to 310 (GANSPNLPESSQQAH). Residues 325 to 334 (ATGATTAGTG) show a composition bias toward low complexity. 2 consecutive WW domains span residues 334 to 367 (GELPPGWEQRTTPEGRPYFVDHNTRTTTWVDPRR) and 394 to 427 (GPLPSGWEMRLTNTARVYFVDHNTKTTTWDDPRL). The region spanning 483 to 816 (SASDLKKRLM…VEETLGFGQE (334 aa)) is the HECT domain. Cys-784 acts as the Glycyl thioester intermediate in catalysis.

It belongs to the RSP5/NEDD4 family. Interacts with creD.

It is found in the cytoplasm. The enzyme catalyses S-ubiquitinyl-[E2 ubiquitin-conjugating enzyme]-L-cysteine + [acceptor protein]-L-lysine = [E2 ubiquitin-conjugating enzyme]-L-cysteine + N(6)-ubiquitinyl-[acceptor protein]-L-lysine.. It participates in protein modification; protein ubiquitination. In terms of biological role, E3 ubiquitin-protein ligase which accepts ubiquitin from an E2 ubiquitin-conjugating enzyme in the form of a thioester and then directly transfers the ubiquitin to targeted substrates. Probably involved in the regulatory network controlling carbon source utilization. The sequence is that of Probable E3 ubiquitin-protein ligase hulA (hulA) from Neosartorya fischeri (strain ATCC 1020 / DSM 3700 / CBS 544.65 / FGSC A1164 / JCM 1740 / NRRL 181 / WB 181) (Aspergillus fischerianus).